The following is a 331-amino-acid chain: UPF0194 membrane protein Ent638_1286 (331 aa).

The signal sequence occupies residues 1–16 (MKKPVVVILAVVVLLA). Positions 107-208 (EEVAQAEAAV…LDLHDTTLIA (102 aa)) form a coiled coil.

The protein belongs to the UPF0194 family.

The protein resides in the periplasm. This Enterobacter sp. (strain 638) protein is UPF0194 membrane protein Ent638_1286.